The following is a 422-amino-acid chain: ATP phosphoribosyltransferase regulatory subunit (422 aa).

The protein belongs to the class-II aminoacyl-tRNA synthetase family. HisZ subfamily. Heteromultimer composed of HisG and HisZ subunits.

The protein resides in the cytoplasm. Its pathway is amino-acid biosynthesis; L-histidine biosynthesis; L-histidine from 5-phospho-alpha-D-ribose 1-diphosphate: step 1/9. Its function is as follows. Required for the first step of histidine biosynthesis. May allow the feedback regulation of ATP phosphoribosyltransferase activity by histidine. The protein is ATP phosphoribosyltransferase regulatory subunit of Clostridium botulinum (strain 657 / Type Ba4).